The following is a 465-amino-acid chain: Serine carboxypeptidase 24 (465 aa).

The first 24 residues, 1–24 (MARTHFIFLLLVALLSTTFPSSSS), serve as a signal peptide directing secretion. 3 N-linked (GlcNAc...) asparagine glycosylation sites follow: Asn-54, Asn-105, and Asn-139. Intrachain disulfides connect Cys-88-Cys-349, Cys-249-Cys-260, and Cys-285-Cys-317. Ser-181 is a catalytic residue. N-linked (GlcNAc...) asparagine glycans are attached at residues Asn-250, Asn-293, and Asn-338. Positions 287–316 (AAQQKKNTTGFFVRMKNTLLRRRLVSGYDP) are cleaved as a propeptide — linker peptide. Active-site residues include Asp-386 and His-438.

This sequence belongs to the peptidase S10 family. As to quaternary structure, heterodimer. Post-translationally, N-glycosylated. In terms of tissue distribution, expressed in shoots, leaves, cauline leaves, siliques and flowers. Expressed a low levels in roots and stems.

Its subcellular location is the secreted. It is found in the extracellular space. It catalyses the reaction Preferential release of a C-terminal arginine or lysine residue.. With respect to regulation, completely inhibited by phenylmethylsulfonyl fluoride (PMSF) and partially by leupeptin. In terms of biological role, active serine carboxypeptidase with broad substrate preference, including basic and hydrophilic groups. Processes a protein involved in an early event in the brassinosteroid signaling pathway. The chain is Serine carboxypeptidase 24 (SCPL24) from Arabidopsis thaliana (Mouse-ear cress).